Consider the following 907-residue polypeptide: MPYIFAFFCTGFLGAVVGANFPNNIQIGGLFPNQQSQEHAAFRFALSQLTEPPKLLPQIDIVNISDSFEMTYRFCSQFSKGVYAIFGFYERRTVNMLTSFCGALHVCFITPSFPVDTSNQFVLQLRPELQEALISIIDHYKWQTFVYIYDADRGLSVLQRVLDTAAEKNWQVTAVNILTTTEEGYRMLFQDLEKKKERLVVVDCESERLNAILGQIVKLEKNGIGYHYILANLGFMDIDLNKFKESGANVTGFQLVNYTDTIPARIMQQWRTSDARDHTRVDWKRPKYTSALTYDGVKVMAEAFQSLRRQRIDISRRGNAGDCLANPAVPWGQGIDIQRALQQVRFEGLTGNVQFNEKGRRTNYTLHVIEMKHDGIRKIGYWNEDDKFVPAATDAQAGGDNSSVQNRTYIVTTILEDPYVMLKKNANQFEGNDRYEGYCVELAAEIAKHVGYSYRLEIVSDGKYGARDPDTKAWNGMVGELVYGRADVAVAPLTITLVREEVIDFSKPFMSLGISIMIKKPQKSKPGVFSFLDPLAYEIWMCIVFAYIGVSVVLFLVSRFSPYEWHSEEFEEGRDQTTSDQSNEFGIFNSLWFSLGAFMQQGCDISPRSLSGRIVGGVWWFFTLIIISSYTANLAAFLTVERMVSPIESAEDLAKQTEIAYGTLEAGSTKEFFRRSKIAVFEKMWTYMKSAEPSVFVRTTEEGMIRVRKSKGKYAYLLESTMNEYIEQRKPCDTMKVGGNLDSKGYGIATPKGSALRGPVNLAVLKLSEQGVLDKLKSKWWYDKGECGSKDSGSKDKTSALSLSNVAGVFYILIGGLGLAMLVALIEFCYKSRSESKRMKGFCLIPQQSINEAIRTSTLPRNSGAGASGGSGSGENGRVVSQDFPKSMQSIPCMSHSSGMPLGATGL.

Residues 1–18 (MPYIFAFFCTGFLGAVVG) form the signal peptide. Residues 19–536 (ANFPNNIQIG…GVFSFLDPLA (518 aa)) are Extracellular-facing. Asn-63, Asn-249, Asn-257, Asn-363, Asn-401, and Asn-406 each carry an N-linked (GlcNAc...) asparagine glycan. A disulfide bridge connects residues Cys-75 and Cys-323. The L-glutamate site is built by Pro-492, Thr-494, and Arg-499. The helical transmembrane segment at 537-557 (YEIWMCIVFAYIGVSVVLFLV) threads the bilayer. The Cytoplasmic portion of the chain corresponds to 558 to 584 (SRFSPYEWHSEEFEEGRDQTTSDQSNE). Positions 585–600 (FGIFNSLWFSLGAFMQ) form an intramembrane region, helical; Pore-forming. An intramembrane segment occupies 601 to 603 (QGC). Cys-603 is lipidated: S-palmitoyl cysteine. Residues 604–609 (DISPRS) lie on the Cytoplasmic side of the membrane. A helical transmembrane segment spans residues 610–630 (LSGRIVGGVWWFFTLIIISSY). The Extracellular segment spans residues 631–805 (TANLAAFLTV…DKTSALSLSN (175 aa)). Position 645 is a phosphoserine (Ser-645). Residues Ser-668 and Thr-669 each contribute to the L-glutamate site. At Ser-710 the chain carries Phosphoserine. Position 719 (Glu-719) interacts with L-glutamate. A disulfide bond links Cys-732 and Cys-787. A helical transmembrane segment spans residues 806–826 (VAGVFYILIGGLGLAMLVALI). Over 827–907 (EFCYKSRSES…SGMPLGATGL (81 aa)) the chain is Cytoplasmic. Residue Cys-829 is the site of S-palmitoyl cysteine attachment. Phosphoserine occurs at positions 849 and 863. The disordered stretch occupies residues 857-881 (STLPRNSGAGASGGSGSGENGRVVS). The segment covering 866 to 875 (GASGGSGSGE) has biased composition (gly residues). A PDZ-binding motif is present at residues 904 to 907 (ATGL).

This sequence belongs to the glutamate-gated ion channel (TC 1.A.10.1) family. GRIA1 subfamily. As to quaternary structure, homotetramer or heterotetramer of pore-forming glutamate receptor subunits. Heteromeric assembly can be the result of both receptor subtype and flip or flop form and according the composition, one partner can be dominant with respect to the fast desensitizing current component, whereas the other can determine the steady-state component. Tetramers may be formed by the dimerization of dimers. Found in a complex with GRIA2, GRIA3, GRIA4, CNIH2, CNIH3, CACNG2, CACNG3, CACNG4, CACNG5, CACNG7 and CACNG8. Interacts with HIP1 and RASGRF2. Interacts with SYNDIG1 and GRIA2. Interacts with DLG1 (via C-terminus). Interacts with LRFN1. Interacts with PRKG2. Interacts with CNIH2 and CACNG2. Interacts with CACNG5; this interaction modulates the gating. Interacts (via C-terminus) with PDLIM4 (via LIM domain); this interaction as well as the interaction of PDLIM4 with alpha-actinin is required for their colocalization in early endosomes. Interacts with SNX27 (via PDZ domain); the interaction is required for recycling to the plasma membrane when endocytosed and prevent degradation in lysosomes. Interacts (via PDZ-binding motif) with SHANK3 (via PDZ domain). Interacts with CACNG3; associates GRIA1 with the adapter protein complex 4 (AP-4) to target GRIA1 to the somatodendritic compartment of neurons. Interacts with CACNG2; this interaction mediates traffick to the plasma membrane and modulation of desensitization. Interacts with CNIH2 and CNIH3; this interaction promotes expression at the plasma membrane and extensively modulates their gating properties by slowing deactivation and desensitization kinetics. Found in a complex with GRIA2, GRIA3, GRIA4, DLG4, CACNG8 and CNIH2. In terms of processing, phosphorylated at Ser-645. Phosphorylated at Ser-710 by PKC. Phosphorylated at Ser-849 by PKC, PKA and CAMK2. Phosphorylated at Ser-863 by PKC, PKA and PRKG2. Phosphorylation of Ser-863 is reduced by induction of long-term depression and increased by induction of long-term potentiation. Palmitoylated. Depalmitoylated by CPT1C and upon L-glutamate stimulation. ZDHHC3/GODZ specifically palmitoylates Cys-603, which leads to Golgi retention and decreased cell surface expression. In contrast, Cys-829 palmitoylation does not affect cell surface expression but regulates stimulation-dependent endocytosis. As to expression, expressed in the outer plexiform layer of the retina of the eye (at protein level). Expressed in the forebrain and hippocampus (at protein level).

The protein localises to the cell membrane. Its subcellular location is the endoplasmic reticulum membrane. It is found in the postsynaptic cell membrane. The protein resides in the postsynaptic density membrane. It localises to the cell projection. The protein localises to the dendrite. Its subcellular location is the dendritic spine. It is found in the early endosome membrane. The protein resides in the recycling endosome membrane. It localises to the presynapse. The protein localises to the synapse. The catalysed reaction is Ca(2+)(in) = Ca(2+)(out). It catalyses the reaction Na(+)(in) = Na(+)(out). It carries out the reaction Mg(2+)(in) = Mg(2+)(out). The enzyme catalyses Li(+)(in) = Li(+)(out). The catalysed reaction is K(+)(in) = K(+)(out). It catalyses the reaction Sr(2+)(in) = Sr(2+)(out). Functionally, ionotropic glutamate receptor that functions as a ligand-gated cation channel, gated by L-glutamate and glutamatergic agonists such as alpha-amino-3-hydroxy-5-methyl-4-isoxazolepropionic acid (AMPA), quisqualic acid, and kainic acid. L-glutamate acts as an excitatory neurotransmitter at many synapses in the central nervous system. Binding of the excitatory neurotransmitter L-glutamate induces a conformation change, leading to the opening of the cation channel, and thereby converts the chemical signal to an electrical impulse upon entry of monovalent and divalent cations such as sodium and calcium. The receptor then desensitizes rapidly and enters in a transient inactive state, characterized by the presence of bound agonist. In the presence of CACNG2 or CACNG4 or CACNG7 or CACNG8, shows resensitization which is characterized by a delayed accumulation of current flux upon continued application of L-glutamate. Calcium (Ca(2+)) permeability depends on subunits composition and, heteromeric channels containing edited GRIA2 subunit are calcium-impermeable. Also permeable to other divalents cations such as strontium(2+) and magnesium(2+) and monovalent cations such as potassium(1+) and lithium(1+). The sequence is that of Glutamate receptor 1 from Mus musculus (Mouse).